The sequence spans 285 residues: Meiotically up-regulated gene 74 protein (285 aa).

The protein resides in the cytoplasm. Has a role in meiosis. This Schizosaccharomyces pombe (strain 972 / ATCC 24843) (Fission yeast) protein is Meiotically up-regulated gene 74 protein (mug74).